A 60-amino-acid chain; its full sequence is Large ribosomal subunit protein uL30 (60 aa).

Belongs to the universal ribosomal protein uL30 family. In terms of assembly, part of the 50S ribosomal subunit.

The chain is Large ribosomal subunit protein uL30 from Shewanella denitrificans (strain OS217 / ATCC BAA-1090 / DSM 15013).